The chain runs to 117 residues: Immunoglobulin heavy variable 4-28 (117 aa).

Residues 1–19 (MKHLWFFLLLVAAPRWVLS) form the signal peptide. A framework-1 region spans residues 20–44 (QVQLQESGPGLVKPSDTLSLTCAVS). The Ig-like domain occupies 20 to 117 (QVQLQESGPG…VDTAVYYCAR (98 aa)). Cysteine 41 and cysteine 115 are disulfide-bonded. The tract at residues 45–53 (GYSISSSNW) is complementarity-determining-1. Residues 54 to 70 (WGWIRQPPGKGLEWIGY) are framework-2. A complementarity-determining-2 region spans residues 71–77 (IYYSGST). Residues 78–115 (YYNPSLKSRVTMSVDTSKNQFSLKLSSVTAVDTAVYYC) are framework-3. Residues 116–117 (AR) form a complementarity-determining-3 region.

Immunoglobulins are composed of two identical heavy chains and two identical light chains; disulfide-linked.

Its subcellular location is the secreted. The protein localises to the cell membrane. In terms of biological role, v region of the variable domain of immunoglobulin heavy chains that participates in the antigen recognition. Immunoglobulins, also known as antibodies, are membrane-bound or secreted glycoproteins produced by B lymphocytes. In the recognition phase of humoral immunity, the membrane-bound immunoglobulins serve as receptors which, upon binding of a specific antigen, trigger the clonal expansion and differentiation of B lymphocytes into immunoglobulins-secreting plasma cells. Secreted immunoglobulins mediate the effector phase of humoral immunity, which results in the elimination of bound antigens. The antigen binding site is formed by the variable domain of one heavy chain, together with that of its associated light chain. Thus, each immunoglobulin has two antigen binding sites with remarkable affinity for a particular antigen. The variable domains are assembled by a process called V-(D)-J rearrangement and can then be subjected to somatic hypermutations which, after exposure to antigen and selection, allow affinity maturation for a particular antigen. The protein is Immunoglobulin heavy variable 4-28 of Homo sapiens (Human).